The primary structure comprises 302 residues: Aliphatic sulfonates import ATP-binding protein SsuB (302 aa).

Positions 30–57 (PATADAQHTADAQHTADAQHTADAQHTA) are enriched in low complexity. Residues 30–65 (PATADAQHTADAQHTADAQHTADAQHTAETAETRGA) form a disordered region. In terms of domain architecture, ABC transporter spans 70 to 284 (IRIRGLRRTF…RRTDPAFDRL (215 aa)). Residue 102–109 (GRSGSGKS) coordinates ATP.

The protein belongs to the ABC transporter superfamily. Aliphatic sulfonates importer (TC 3.A.1.17.2) family. The complex is composed of two ATP-binding proteins (SsuB), two transmembrane proteins (SsuC) and a solute-binding protein (SsuA).

The protein localises to the cell membrane. It catalyses the reaction ATP + H2O + aliphatic sulfonate-[sulfonate-binding protein]Side 1 = ADP + phosphate + aliphatic sulfonateSide 2 + [sulfonate-binding protein]Side 1.. Its function is as follows. Part of the ABC transporter complex SsuABC involved in aliphatic sulfonates import. Responsible for energy coupling to the transport system. This chain is Aliphatic sulfonates import ATP-binding protein SsuB, found in Frankia casuarinae (strain DSM 45818 / CECT 9043 / HFP020203 / CcI3).